The following is a 91-amino-acid chain: Small ribosomal subunit protein uS19 (91 aa).

The protein belongs to the universal ribosomal protein uS19 family.

Functionally, protein S19 forms a complex with S13 that binds strongly to the 16S ribosomal RNA. This Synechococcus sp. (strain RCC307) protein is Small ribosomal subunit protein uS19.